Consider the following 147-residue polypeptide: Large ribosomal subunit protein uL16c (147 aa).

Over residues 1-17 the composition is skewed to basic residues; sequence MLSPKRTRFRKQHRGRM. The tract at residues 1 to 20 is disordered; it reads MLSPKRTRFRKQHRGRMKGI.

Belongs to the universal ribosomal protein uL16 family. Part of the 50S ribosomal subunit.

It is found in the plastid. The protein resides in the chloroplast. This is Large ribosomal subunit protein uL16c from Ipomoea purpurea (Common morning glory).